A 392-amino-acid polypeptide reads, in one-letter code: RNA-binding motif protein, X-linked-like-2 (392 aa).

The region spanning 8 to 86 is the RRM domain; sequence GKLFIGGLNL…KAIKVAQATK (79 aa). Positions 67–78 are enriched in basic and acidic residues; the sequence is RDMNGKSLDGKA. The disordered stretch occupies residues 67 to 392; the sequence is RDMNGKSLDG…LERGGGRSRY (326 aa). Positions 150-163 are enriched in pro residues; it reads RGPPPRRVGPPPKR. Composition is skewed to basic and acidic residues over residues 194–229 and 238–283; these read PRRE…REPR and YTHR…REPF. Over residues 319–331 the composition is skewed to low complexity; sequence YSGGRDSYSSSYG. A compositionally biased stretch (basic and acidic residues) spans 381–392; it reads GRLERGGGRSRY.

As to expression, expressed predominantly in spermatocytes and less in round spermatids (at protein level). Expressed in germ cells.

Its subcellular location is the nucleus. This chain is RNA-binding motif protein, X-linked-like-2 (RBMXL2), found in Homo sapiens (Human).